Reading from the N-terminus, the 143-residue chain is Putative transcriptional regulatory protein PH0763 (143 aa).

It belongs to the Tfx family.

Functionally, putative transcriptional regulator. In Pyrococcus horikoshii (strain ATCC 700860 / DSM 12428 / JCM 9974 / NBRC 100139 / OT-3), this protein is Putative transcriptional regulatory protein PH0763.